We begin with the raw amino-acid sequence, 149 residues long: D-aminoacyl-tRNA deacylase (149 aa).

Positions 137 to 138 (GP) match the Gly-cisPro motif, important for rejection of L-amino acids motif.

The protein belongs to the DTD family. As to quaternary structure, homodimer.

It is found in the cytoplasm. It catalyses the reaction glycyl-tRNA(Ala) + H2O = tRNA(Ala) + glycine + H(+). The catalysed reaction is a D-aminoacyl-tRNA + H2O = a tRNA + a D-alpha-amino acid + H(+). Its function is as follows. An aminoacyl-tRNA editing enzyme that deacylates mischarged D-aminoacyl-tRNAs. Also deacylates mischarged glycyl-tRNA(Ala), protecting cells against glycine mischarging by AlaRS. Acts via tRNA-based rather than protein-based catalysis; rejects L-amino acids rather than detecting D-amino acids in the active site. By recycling D-aminoacyl-tRNA to D-amino acids and free tRNA molecules, this enzyme counteracts the toxicity associated with the formation of D-aminoacyl-tRNA entities in vivo and helps enforce protein L-homochirality. The sequence is that of D-aminoacyl-tRNA deacylase from Clostridium tetani (strain Massachusetts / E88).